Reading from the N-terminus, the 271-residue chain is uncharacterized protein (271 aa).

3 helical membrane passes run 30–50, 189–209, and 218–238; these read IWFP…GMLL, ALAA…YFLI, and FLVT…IFAC.

Its subcellular location is the cell membrane. This is an uncharacterized protein from Aquifex aeolicus (strain VF5).